The primary structure comprises 311 residues: Cathepsin B (311 aa).

The N-terminal stretch at 1-19 (MRVLLSLVVILFIINSAFA) is a signal peptide. A propeptide spanning residues 20–78 (VKINIGRPTKSHKTIHHETWVEEQTDQFDNIKVGQLLGFKRSPNRPKLQIKSYDPLGVQ) is cleaved from the precursor. N-linked (GlcNAc...) asparagine glycosylation is present at asparagine 91. Disulfide bonds link cysteine 92-cysteine 121, cysteine 104-cysteine 145, cysteine 138-cysteine 191, cysteine 167-cysteine 195, and cysteine 175-cysteine 182. Cysteine 107 is a catalytic residue. Asparagine 198 is a glycosylation site (N-linked (GlcNAc...) asparagine). Active-site residues include histidine 261 and asparagine 281. A glycan (N-linked (GlcNAc...) asparagine) is linked at asparagine 290.

The protein belongs to the peptidase C1 family.

It localises to the lysosome. The catalysed reaction is Hydrolysis of proteins with broad specificity for peptide bonds. Preferentially cleaves -Arg-Arg-|-Xaa bonds in small molecule substrates (thus differing from cathepsin L). In addition to being an endopeptidase, shows peptidyl-dipeptidase activity, liberating C-terminal dipeptides.. Functionally, thiol protease which is believed to participate in intracellular degradation and turnover of proteins. The chain is Cathepsin B (ctsB) from Dictyostelium discoideum (Social amoeba).